Reading from the N-terminus, the 88-residue chain is UPF0223 protein YktA (88 aa).

This sequence belongs to the UPF0223 family.

This chain is UPF0223 protein YktA (yktA), found in Bacillus subtilis (strain 168).